Consider the following 361-residue polypeptide: Caveolae-associated protein 4 (361 aa).

Positions 1–21 (MEHNGSASNADKIHQNRLSNV) are disordered. Positions 100-124 (IKDVKARVEKQQTHVKKVEAKQEEI) form a coiled coil. Phosphoserine is present on residues Ser-152, Ser-171, and Ser-172. A coiled-coil region spans residues 204–248 (ENMQKTRQNFDKKVNRIRTRIVTPERRERLRQSGERLRQSGERLK). Over residues 230 to 255 (RERLRQSGERLRQSGERLKQSGERFK) the composition is skewed to basic and acidic residues. Disordered regions lie at residues 230 to 283 (RERL…AVAE) and 310 to 346 (PEAL…FKPQ). A Phosphothreonine modification is found at Thr-335. The residue at position 354 (Ser-354) is a Phosphoserine.

This sequence belongs to the CAVIN family. As to quaternary structure, component of the CAVIN complex composed of CAVIN1, CAVIN2, CAVIN3 and CAVIN4. Interacts with CAVIN1, ADRA1A, ADRA1B, MAPK1 and MAPK3. Interacts with CAVIN2; this augments the transactivation of NPPA.

It is found in the cytoplasm. The protein resides in the myofibril. Its subcellular location is the sarcomere. It localises to the cytosol. The protein localises to the cell membrane. It is found in the sarcolemma. The protein resides in the membrane. Its subcellular location is the caveola. In terms of biological role, modulates the morphology of formed caveolae in cardiomyocytes, but is not required for caveolar formation. Facilitates the recruitment of MAPK1/3 to caveolae within cardiomyocytes and regulates alpha-1 adrenergic receptor-induced hypertrophic responses in cardiomyocytes through MAPK1/3 activation. Contributes to proper membrane localization and stabilization of caveolin-3 (CAV3) in cardiomyocytes. Induces RHOA activation and activates NPPA transcription and myofibrillar organization through the Rho/ROCK signaling pathway. This chain is Caveolae-associated protein 4 (CAVIN4), found in Bos taurus (Bovine).